Here is a 401-residue protein sequence, read N- to C-terminus: MENLSSRLDLLQEQLMNLYEQDSKLIEDQIKQWNLIRQEQVLFHFARKNGVMRIGLQAVPSLASSQEKAKTAIEMVLHLESLKDSPYGTEDWSLQDTSRELFLAPPAGTFKKSGSTLEVTYDNNPDNQTRHTIWNHVYYQNGDDVWRKVSSGVDAVGVYYLEHDGYKNYYVLFAEEASKYSTTGQYAVNYRGKRFTNVMSSTSSPRAAGAPAVHSDYPTLSESDTAQQSTSIDYTELPGQGETSQVRQRQQKTPVRRRPYGRRRSRSPRGGGRREGESTPSRTPGSVPSARDVGSIHTTPQKGHSSRLRRLLQEAWDPPVVCVKGGANQLKCLRYRLKASTQVDFDSISTTWHWTDRKNTERIGSARMLVKFIDEAQREKFLERVALPRSVSVFLGQFNGS.

The segment at 1 to 202 (MENLSSRLDL…KRFTNVMSST (202 aa)) is transactivation domain. Positions 199–308 (MSSTSSPRAA…TPQKGHSSRL (110 aa)) are disordered. 2 stretches are compositionally biased toward polar residues: residues 218–233 (PTLS…TSID) and 241–253 (GETS…QQKT). A compositionally biased stretch (basic residues) spans 254 to 267 (PVRRRPYGRRRSRS). Positions 317–401 (DPPVVCVKGG…SVFLGQFNGS (85 aa)) are DNA-binding domain. A Glycyl lysine isopeptide (Lys-Gly) (interchain with G-Cter in SUMO) cross-link involves residue Lys324.

It belongs to the papillomaviridae E2 protein family. As to quaternary structure, binds DNA as homodimer. Interacts with protein E1; this interaction greatly increases E1 DNA-binding activity. Interacts with protein L1; this interaction enhances E2-dependent replication and transcription activation. Interacts with protein L2; this interaction inhibits E2 transcriptional activity but not DNA replication function E2. Interacts with protein E7; this interaction inhibits E7 oncogenic activity. Interacts with host TAF1; this interaction modulates E2-dependent transcriptional regulation. Interacts with host BRD4; this interaction mediates E2 transcriptional activation function. Additionally, the interaction with host BRD4 on mitotic chromosomes mediates tethering of the viral genome. Interacts with host TOPBP1; this interaction is required for optimal viral DNA replication. In terms of processing, phosphorylated. Sumoylation plays a regulatory role in E2 transcriptional activity.

It localises to the host nucleus. In terms of biological role, plays a role in the initiation of viral DNA replication. A dimer of E2 interacts with a dimer of E1 in order to improve specificity of E1 DNA binding activity. Once the complex recognizes and binds DNA at specific sites, the E2 dimer is removed from DNA. E2 also regulates viral transcription through binding to the E2RE response element (5'-ACCNNNNNNGGT-3') present in multiple copies in the regulatory regions of the viral genome. Activates or represses transcription depending on E2RE's position with regards to proximal promoter elements including the TATA-box. Repression occurs by sterically hindering the assembly of the transcription initiation complex. The chain is Regulatory protein E2 from Homo sapiens (Human).